A 186-amino-acid polypeptide reads, in one-letter code: Interferon lambda-3 (186 aa).

The signal sequence occupies residues 1–21; it reads MVCYGVTIILVGTLGSLLVGA. 3 disulfide bridges follow: Cys31–Cys128, Cys65–Cys160, and Cys178–Cys185.

This sequence belongs to the lambda interferon family.

Its subcellular location is the secreted. Its function is as follows. Cytokine which plays a critical role in the antiviral host defense, predominantly in the epithelial tissues. Acts as a ligand for the heterodimeric class II cytokine receptor composed of IL10RB and IFNLR1, and receptor engagement leads to the activation of the JAK/STAT signaling pathway resulting in the expression of IFN-stimulated genes (ISG), which mediate the antiviral state. Has a restricted receptor distribution and therefore restricted targets: is primarily active in epithelial cells and this cell type-selective action is because of the epithelial cell-specific expression of its receptor IFNLR1. Exhibits antiviral activity against the H5N1 influenza A virus. Induces the expression of the antiviral MX protein in epithelial-rich tissues, such as intestine, trachea and lung. The chain is Interferon lambda-3 (IFNL3) from Gallus gallus (Chicken).